We begin with the raw amino-acid sequence, 216 residues long: 3-isopropylmalate dehydratase small subunit (216 aa).

Belongs to the LeuD family. LeuD type 1 subfamily. In terms of assembly, heterodimer of LeuC and LeuD.

It catalyses the reaction (2R,3S)-3-isopropylmalate = (2S)-2-isopropylmalate. It functions in the pathway amino-acid biosynthesis; L-leucine biosynthesis; L-leucine from 3-methyl-2-oxobutanoate: step 2/4. Its function is as follows. Catalyzes the isomerization between 2-isopropylmalate and 3-isopropylmalate, via the formation of 2-isopropylmaleate. This chain is 3-isopropylmalate dehydratase small subunit, found in Marinomonas sp. (strain MWYL1).